A 452-amino-acid chain; its full sequence is Inner membrane metabolite transport protein YdjE (452 aa).

Topologically, residues 1–20 are cytoplasmic; the sequence is MEQYDQIGARLDRLPLARFH. The helical transmembrane segment at 21-43 threads the bilayer; the sequence is YRIFGIISFSLLLTGFLSYSGNV. Over 44–57 the chain is Periplasmic; sequence VLAKLVSNGWSNNF. The helical transmembrane segment at 58-80 threads the bilayer; sequence LNAAFTSALMFGYFIGSLTGGFI. Topologically, residues 81-91 are cytoplasmic; it reads GDYFGRRRAFR. Residues 92–114 form a helical membrane-spanning segment; it reads INLLIVGIAATGAAFVPDMYWLI. Over 115 to 117 the chain is Periplasmic; the sequence is FFR. The chain crosses the membrane as a helical span at residues 118–140; it reads FLMGTGMGALIMVGYASFTEFIP. Over 141 to 152 the chain is Cytoplasmic; the sequence is ATVRGKWSARLS. A helical transmembrane segment spans residues 153 to 175; that stretch reads FVGNWSPMLSAAIGVVVIAFFSW. Over 176–178 the chain is Periplasmic; sequence RIM. The helical transmembrane segment at 179 to 198 threads the bilayer; sequence FLLGGIGILLAWFLSGKYFI. The Cytoplasmic segment spans residues 199-265; the sequence is ESPRWLAGKG…KGEMLRRTLV (67 aa). The helical transmembrane segment at 266 to 288 threads the bilayer; that stretch reads AITVLIAMNISLYTITVWIPTIF. Over 289-297 the chain is Periplasmic; sequence VNSGIDVDK. The chain crosses the membrane as a helical span at residues 298-320; that stretch reads SILMTAVIMIGAPVGIFIAALII. The Cytoplasmic segment spans residues 321-326; sequence DHFPRR. The chain crosses the membrane as a helical span at residues 327 to 344; that stretch reads LFGSTLLIIIAVLGYIYS. Topologically, residues 345–353 are periplasmic; it reads IQTTEWAIL. A helical transmembrane segment spans residues 354 to 376; the sequence is IYGLVMIFFLYMYVCFASAVYIP. At 377 to 388 the chain is on the cytoplasmic side; the sequence is ELWPTHLRLRGS. Residues 389 to 411 form a helical membrane-spanning segment; the sequence is GFVNAVGRIVAVFTPYGVAALLT. Topologically, residues 412–415 are periplasmic; that stretch reads HYGS. Residues 416-438 form a helical membrane-spanning segment; that stretch reads ITVFMVLGVMLLLCALVLSIFGI. Over 439 to 452 the chain is Cytoplasmic; it reads ETRKVSLEEISEVN.

It belongs to the major facilitator superfamily. Sugar transporter (TC 2.A.1.1) family.

It localises to the cell inner membrane. This is Inner membrane metabolite transport protein YdjE (ydjE) from Escherichia coli (strain K12).